Here is a 429-residue protein sequence, read N- to C-terminus: Glutamate-1-semialdehyde 2,1-aminomutase 2 (429 aa).

Position 268 is an N6-(pyridoxal phosphate)lysine (Lys-268).

Belongs to the class-III pyridoxal-phosphate-dependent aminotransferase family. HemL subfamily. Homodimer. Pyridoxal 5'-phosphate serves as cofactor.

The protein resides in the cytoplasm. The catalysed reaction is (S)-4-amino-5-oxopentanoate = 5-aminolevulinate. It functions in the pathway porphyrin-containing compound metabolism; protoporphyrin-IX biosynthesis; 5-aminolevulinate from L-glutamyl-tRNA(Glu): step 2/2. The polypeptide is Glutamate-1-semialdehyde 2,1-aminomutase 2 (Bacillus cereus (strain ATCC 10987 / NRS 248)).